The primary structure comprises 383 residues: Lipid-A-disaccharide synthase (383 aa).

Belongs to the LpxB family.

It carries out the reaction a lipid X + a UDP-2-N,3-O-bis[(3R)-3-hydroxyacyl]-alpha-D-glucosamine = a lipid A disaccharide + UDP + H(+). Its pathway is bacterial outer membrane biogenesis; LPS lipid A biosynthesis. In terms of biological role, condensation of UDP-2,3-diacylglucosamine and 2,3-diacylglucosamine-1-phosphate to form lipid A disaccharide, a precursor of lipid A, a phosphorylated glycolipid that anchors the lipopolysaccharide to the outer membrane of the cell. The polypeptide is Lipid-A-disaccharide synthase (Aliivibrio fischeri (strain ATCC 700601 / ES114) (Vibrio fischeri)).